The primary structure comprises 798 residues: Penicillin-binding protein 1A (798 aa).

At I2–C9 the chain is on the cytoplasmic side. A helical; Signal-anchor for type II membrane protein membrane pass occupies residues F10–V30. Residues T31–F798 lie on the Periplasmic side of the membrane. The transglycosylase stretch occupies residues L50–E218. Catalysis depends on E88, which acts as the Proton donor; for transglycosylase activity. Positions R378 to D700 are transpeptidase. S461 functions as the Acyl-ester intermediate; for transpeptidase activity in the catalytic mechanism. Residues L739–F798 are disordered. A compositionally biased stretch (basic and acidic residues) spans Q766–V777. A compositionally biased stretch (polar residues) spans L783–F798.

It in the N-terminal section; belongs to the glycosyltransferase 51 family. This sequence in the C-terminal section; belongs to the transpeptidase family.

It is found in the cell inner membrane. It catalyses the reaction [GlcNAc-(1-&gt;4)-Mur2Ac(oyl-L-Ala-gamma-D-Glu-L-Lys-D-Ala-D-Ala)](n)-di-trans,octa-cis-undecaprenyl diphosphate + beta-D-GlcNAc-(1-&gt;4)-Mur2Ac(oyl-L-Ala-gamma-D-Glu-L-Lys-D-Ala-D-Ala)-di-trans,octa-cis-undecaprenyl diphosphate = [GlcNAc-(1-&gt;4)-Mur2Ac(oyl-L-Ala-gamma-D-Glu-L-Lys-D-Ala-D-Ala)](n+1)-di-trans,octa-cis-undecaprenyl diphosphate + di-trans,octa-cis-undecaprenyl diphosphate + H(+). It carries out the reaction Preferential cleavage: (Ac)2-L-Lys-D-Ala-|-D-Ala. Also transpeptidation of peptidyl-alanyl moieties that are N-acyl substituents of D-alanine.. The protein operates within cell wall biogenesis; peptidoglycan biosynthesis. In terms of biological role, cell wall formation. Synthesis of cross-linked peptidoglycan from the lipid intermediates. The enzyme has a penicillin-insensitive transglycosylase N-terminal domain (formation of linear glycan strands) and a penicillin-sensitive transpeptidase C-terminal domain (cross-linking of the peptide subunits). Essential for cell wall synthesis. This is Penicillin-binding protein 1A (mrcA) from Neisseria gonorrhoeae (strain ATCC 700825 / FA 1090).